The chain runs to 246 residues: tRNA (guanine-N(1)-)-methyltransferase (246 aa).

S-adenosyl-L-methionine-binding positions include G112 and 131–136 (IGDYVL).

Belongs to the RNA methyltransferase TrmD family. Homodimer.

Its subcellular location is the cytoplasm. The enzyme catalyses guanosine(37) in tRNA + S-adenosyl-L-methionine = N(1)-methylguanosine(37) in tRNA + S-adenosyl-L-homocysteine + H(+). Specifically methylates guanosine-37 in various tRNAs. This is tRNA (guanine-N(1)-)-methyltransferase from Thermosipho africanus (strain TCF52B).